The primary structure comprises 220 residues: Iron-sulfur cluster repair protein YtfE (220 aa).

It belongs to the RIC family. YtfE subfamily. In terms of assembly, homodimer.

Its subcellular location is the cytoplasm. Its function is as follows. Di-iron-containing protein involved in the repair of iron-sulfur clusters damaged by oxidative and nitrosative stress conditions. This chain is Iron-sulfur cluster repair protein YtfE, found in Citrobacter koseri (strain ATCC BAA-895 / CDC 4225-83 / SGSC4696).